Here is a 296-residue protein sequence, read N- to C-terminus: Cbb3-type cytochrome c oxidase subunit CcoP (296 aa).

The Cytoplasmic portion of the chain corresponds to 1–31 (MAQNYKDELSGVETTGHEWDGLRELNNPLPK). The helical transmembrane segment at 32–52 (WWLYLFYVCIAWAMVYYVFYP) threads the bilayer. The Periplasmic portion of the chain corresponds to 53–296 (AWPLGKTYTK…VYVHNLGGGK (244 aa)). Cytochrome c domains follow at residues 108–200 (FAMA…LSLN) and 207–293 (GKVA…HNLG). C121, C124, H125, M175, C220, C223, H224, and M270 together coordinate heme c.

Belongs to the CcoP / FixP family. Component of the cbb3-type cytochrome c oxidase at least composed of CcoN, CcoO, CcoQ and CcoP. The cofactor is heme c.

It localises to the cell inner membrane. The protein operates within energy metabolism; oxidative phosphorylation. In terms of biological role, C-type cytochrome. Part of the cbb3-type cytochrome c oxidase complex. CcoP subunit is required for transferring electrons from donor cytochrome c via its heme groups to CcoO subunit. From there, electrons are shuttled to the catalytic binuclear center of CcoN subunit where oxygen reduction takes place. The complex also functions as a proton pump. This Azospirillum sp. (strain B510) protein is Cbb3-type cytochrome c oxidase subunit CcoP.